We begin with the raw amino-acid sequence, 846 residues long: Enhancer of polycomb-like protein 1 (846 aa).

Disordered stretches follow at residues 169-204, 391-466, 587-609, 682-702, and 759-804; these read FNSK…KGDA, TSDE…APDA, EKKR…PKAM, AADA…PQPN, and QVQA…GVKQ. Basic and acidic residues predominate over residues 180-203; that stretch reads VKSDKEQGRGMRVKGKDREKEKGD. Positions 411–426 are enriched in polar residues; it reads PSLSGQTPLTSGQSSS. Positions 432 to 452 are enriched in basic and acidic residues; the sequence is TDKDREERAQRERYDAQRNAE. A coiled-coil region spans residues 434-490; the sequence is KDREERAQRERYDAQRNAERSGILSGRSNAPDALKERLQALQQKTEEMLARKKEQDA. A compositionally biased stretch (pro residues) spans 686–702; it reads KPPPAPIFQKPPAPQPN. Positions 759 to 773 are enriched in low complexity; sequence QVQAQGQGHPQAHLQ. A compositionally biased stretch (polar residues) spans 774 to 796; it reads THPQGVSQPNGVNSPMPNGQQML.

It belongs to the enhancer of polycomb family. As to quaternary structure, component of the NuA4 histone acetyltransferase complex.

The protein localises to the nucleus. In terms of biological role, component of the NuA4 histone acetyltransferase complex which is involved in transcriptional activation of selected genes principally by acetylation of nucleosomal histone H4 and H2A. The NuA4 complex is also involved in DNA repair. Involved in gene silencing by neighboring heterochromatin, blockage of the silencing spreading along the chromosome, and required for cell cycle progression through G2/M. The protein is Enhancer of polycomb-like protein 1 (EPL1) of Cryptococcus neoformans var. neoformans serotype D (strain B-3501A) (Filobasidiella neoformans).